Reading from the N-terminus, the 142-residue chain is Large ribosomal subunit protein uL11 (142 aa).

The protein belongs to the universal ribosomal protein uL11 family. As to quaternary structure, part of the ribosomal stalk of the 50S ribosomal subunit. Interacts with L10 and the large rRNA to form the base of the stalk. L10 forms an elongated spine to which L12 dimers bind in a sequential fashion forming a multimeric L10(L12)X complex. In terms of processing, one or more lysine residues are methylated.

Forms part of the ribosomal stalk which helps the ribosome interact with GTP-bound translation factors. The polypeptide is Large ribosomal subunit protein uL11 (Shewanella frigidimarina (strain NCIMB 400)).